The primary structure comprises 106 residues: Toxin-like structure LSTX-D8 (106 aa).

An N-terminal signal peptide occupies residues 1 to 20 (MTKVLVVVALLVTLISYSSS). Residues 21–41 (EGIDDLEADELLSLMANEQTR) constitute a propeptide that is removed on maturation. Intrachain disulfides connect cysteine 45/cysteine 60, cysteine 52/cysteine 69, cysteine 59/cysteine 85, and cysteine 71/cysteine 83.

The protein belongs to the neurotoxin 19 (CSTX) family. 02 (D7) subfamily. Expressed by the venom gland.

It localises to the secreted. This Lycosa singoriensis (Wolf spider) protein is Toxin-like structure LSTX-D8.